The sequence spans 203 residues: Ribonuclease HII (203 aa).

One can recognise an RNase H type-2 domain in the interval 16 to 203; the sequence is ENIACCDEVG…HRKSFLNKIL (188 aa). A divalent metal cation-binding residues include Asp-22, Glu-23, and Asp-120.

It belongs to the RNase HII family. Mn(2+) is required as a cofactor. The cofactor is Mg(2+).

The protein resides in the cytoplasm. It carries out the reaction Endonucleolytic cleavage to 5'-phosphomonoester.. Functionally, endonuclease that specifically degrades the RNA of RNA-DNA hybrids. The polypeptide is Ribonuclease HII (Alkaliphilus oremlandii (strain OhILAs) (Clostridium oremlandii (strain OhILAs))).